A 318-amino-acid chain; its full sequence is MRIKATVERLPGGMMLVPLLLGALCHTLWPQAGSTLGSFSNGLISGTVPILAVWFFCMGATIQLRASGRVLRRSGSLVLTKIAVAWLVAVLCAPLLPIGGVSSGPLAGLSVLALVAAMDMTNGGLYAALMQQYGSSEDAGAVVLMSLESGPLISMLILGASGLASFEPQLFVGAVLPLLLGFALGNLDAELRQFFAQATKTLVPFFGFALGNTLDLSTIAHTGTSGVLLGVAVVVITGLPLLLADRWIGGGNGTAGVAASSTAGAAVATPALIAGMAPQFAPAAPAATALVASAVIVTSLLVPLLTALYARRGDARSG.

10 helical membrane-spanning segments follow: residues 10–30 (LPGG…TLWP), 42–62 (GLIS…GATI), 82–102 (IAVA…GGVS), 109–129 (LSVL…YAAL), 139–159 (AGAV…LILG), 163–183 (LASF…LGFA), 201–221 (TLVP…TIAH), 224–244 (TSGV…LLLA), 257–277 (VAAS…AGMA), and 289–309 (ALVA…TALY).

Belongs to the KdgT transporter family.

The protein localises to the cell inner membrane. It catalyses the reaction 2-dehydro-3-deoxy-D-gluconate(in) + H(+)(in) = 2-dehydro-3-deoxy-D-gluconate(out) + H(+)(out). Its function is as follows. Catalyzes the proton-dependent uptake of 2-keto-3-deoxygluconate (KDG) into the cell. The polypeptide is 2-keto-3-deoxygluconate permease (Xanthomonas axonopodis pv. citri (strain 306)).